The chain runs to 366 residues: Alanine racemase (366 aa).

Catalysis depends on Lys-33, which acts as the Proton acceptor; specific for D-alanine. Position 33 is an N6-(pyridoxal phosphate)lysine (Lys-33). Arg-129 provides a ligand contact to substrate. Residue Tyr-253 is the Proton acceptor; specific for L-alanine of the active site. Residue Met-301 coordinates substrate.

Belongs to the alanine racemase family. Pyridoxal 5'-phosphate serves as cofactor.

The enzyme catalyses L-alanine = D-alanine. It participates in amino-acid biosynthesis; D-alanine biosynthesis; D-alanine from L-alanine: step 1/1. Catalyzes the interconversion of L-alanine and D-alanine. May also act on other amino acids. This Xanthomonas oryzae pv. oryzae (strain KACC10331 / KXO85) protein is Alanine racemase (alr).